The chain runs to 1805 residues: Obscurin-like protein 1 (1805 aa).

Position 10 is a phosphoserine (Ser-10). In terms of domain architecture, Ig-like 1 spans 12–100; the sequence is PCFLRFPRPV…GEAYAAAAVT (89 aa). Residues 17-19 form an interaction with TTN region; it reads FPR. Cys-33 and Cys-84 are joined by a disulfide. The interaction with TTN stretch occupies residues 85–94; sequence RARNAAGEAY. Residues 104–122 show a composition bias toward pro residues; that stretch reads PPAPEPEPQSSECPPPPPG. The segment at 104 to 131 is disordered; that stretch reads PPAPEPEPQSSECPPPPPGTGEGAPVFL. Ig-like domains lie at 128-225, 240-330, and 339-425; these read PVFL…ALLQ, PPVR…QTLS, and PRLR…ANVT. 3 disulfides stabilise this stretch: Cys-149-Cys-209, Cys-267-Cys-319, and Cys-362-Cys-412. Positions 517–615 constitute a Fibronectin type-III domain; sequence PPGPPVLVEM…FNGSAHLVPT (99 aa). 10 Ig-like domains span residues 720-800, 804-891, 902-982, 986-1075, 1078-1165, 1176-1261, 1266-1351, 1355-1442, 1536-1628, and 1702-1798; these read PQDK…FSVT, PPVH…FTVT, PNGK…FTIT, PPVR…VTVT, PERI…FNVS, PEAV…FNVQ, PPVK…ARLH, TELL…ARLS, PVTI…REVS, and PAQS…ADTQ. Disulfide bonds link Cys-738–Cys-788, Cys-829–Cys-879, Cys-920–Cys-970, Cys-1011–Cys-1061, Cys-1103–Cys-1153, and Cys-1195–Cys-1245. Residues Cys-1558 and Cys-1608 are joined by a disulfide bond.

As to quaternary structure, component of the 3M complex, composed of core components CUL7, CCDC8 and OBSL1. Interacts with CCDC8. Interacts with CUL7; the interaction is direct. Interacts with FBXW8. Interacts (via N-terminal Ig-like domain) with TTN/titin (via C-terminal Ig-like domain); the interaction is direct. As to expression, expressed in granule neurons, with levels decreasing with neuronal maturation.

The protein resides in the cytoplasm. It is found in the perinuclear region. Its subcellular location is the golgi apparatus. In terms of biological role, core component of the 3M complex, a complex required to regulate microtubule dynamics and genome integrity. It is unclear how the 3M complex regulates microtubules, it could act by controlling the level of a microtubule stabilizer. Acts as a regulator of the Cul7-RING(FBXW8) ubiquitin-protein ligase, playing a critical role in the ubiquitin ligase pathway that regulates Golgi morphogenesis and dendrite patterning in brain. Required to localize CUL7 to the Golgi apparatus in neurons. The polypeptide is Obscurin-like protein 1 (Obsl1) (Rattus norvegicus (Rat)).